Reading from the N-terminus, the 92-residue chain is Small ribosomal subunit protein uS19 (92 aa).

It belongs to the universal ribosomal protein uS19 family.

In terms of biological role, protein S19 forms a complex with S13 that binds strongly to the 16S ribosomal RNA. This is Small ribosomal subunit protein uS19 from Aeromonas hydrophila subsp. hydrophila (strain ATCC 7966 / DSM 30187 / BCRC 13018 / CCUG 14551 / JCM 1027 / KCTC 2358 / NCIMB 9240 / NCTC 8049).